A 51-amino-acid polypeptide reads, in one-letter code: Proteinase inhibitor PTI (51 aa).

4 cysteine pairs are disulfide-bonded: Cys-3–Cys-40, Cys-6–Cys-24, Cys-7–Cys-36, and Cys-13–Cys-49.

The protein belongs to the protease inhibitor I20 (potato type II proteinase inhibitor) family.

It is found in the secreted. This chain is Proteinase inhibitor PTI, found in Solanum tuberosum (Potato).